The primary structure comprises 102 residues: Large ribosomal subunit protein bL21 (102 aa).

This sequence belongs to the bacterial ribosomal protein bL21 family. Part of the 50S ribosomal subunit. Contacts protein L20.

Functionally, this protein binds to 23S rRNA in the presence of protein L20. The protein is Large ribosomal subunit protein bL21 of Syntrophotalea carbinolica (strain DSM 2380 / NBRC 103641 / GraBd1) (Pelobacter carbinolicus).